A 166-amino-acid polypeptide reads, in one-letter code: Large ribosomal subunit protein uL10 (166 aa).

It belongs to the universal ribosomal protein uL10 family. In terms of assembly, part of the ribosomal stalk of the 50S ribosomal subunit. The N-terminus interacts with L11 and the large rRNA to form the base of the stalk. The C-terminus forms an elongated spine to which L12 dimers bind in a sequential fashion forming a multimeric L10(L12)X complex.

Functionally, forms part of the ribosomal stalk, playing a central role in the interaction of the ribosome with GTP-bound translation factors. This Pseudomonas fluorescens (strain ATCC BAA-477 / NRRL B-23932 / Pf-5) protein is Large ribosomal subunit protein uL10.